Reading from the N-terminus, the 83-residue chain is MSGNTGERSFADIITSIRYWVIHSITIPSLFIAGWLFVSTGLAYDVFGSPRPNEYFTESRQGIPLITGRFDSLEQLNEFSRSF.

Residues 21–35 form a helical membrane-spanning segment; the sequence is VIHSITIPSLFIAGW. Histidine 23 lines the heme pocket.

This sequence belongs to the PsbE/PsbF family. In terms of assembly, heterodimer of an alpha subunit and a beta subunit. PSII is composed of 1 copy each of membrane proteins PsbA, PsbB, PsbC, PsbD, PsbE, PsbF, PsbH, PsbI, PsbJ, PsbK, PsbL, PsbM, PsbT, PsbX, PsbY, PsbZ, Psb30/Ycf12, at least 3 peripheral proteins of the oxygen-evolving complex and a large number of cofactors. It forms dimeric complexes. Heme b is required as a cofactor.

Its subcellular location is the plastid membrane. Functionally, this b-type cytochrome is tightly associated with the reaction center of photosystem II (PSII). PSII is a light-driven water:plastoquinone oxidoreductase that uses light energy to abstract electrons from H(2)O, generating O(2) and a proton gradient subsequently used for ATP formation. It consists of a core antenna complex that captures photons, and an electron transfer chain that converts photonic excitation into a charge separation. In Cuscuta reflexa (Southern Asian dodder), this protein is Cytochrome b559 subunit alpha.